A 381-amino-acid polypeptide reads, in one-letter code: Putative glycosyltransferase EpsD (381 aa).

This sequence belongs to the glycosyltransferase group 1 family. Glycosyltransferase 4 subfamily.

Its function is as follows. May be involved in the production of the exopolysaccharide (EPS) component of the extracellular matrix during biofilm formation. EPS is responsible for the adhesion of chains of cells into bundles. Required for biofilm maintenance. This chain is Putative glycosyltransferase EpsD (epsD), found in Bacillus subtilis (strain 168).